A 190-amino-acid chain; its full sequence is 7-methyl-GTP pyrophosphatase (190 aa).

The Proton acceptor role is filled by Asp69.

It belongs to the Maf family. YceF subfamily. The cofactor is a divalent metal cation.

The protein localises to the cytoplasm. The enzyme catalyses N(7)-methyl-GTP + H2O = N(7)-methyl-GMP + diphosphate + H(+). In terms of biological role, nucleoside triphosphate pyrophosphatase that hydrolyzes 7-methyl-GTP (m(7)GTP). May have a dual role in cell division arrest and in preventing the incorporation of modified nucleotides into cellular nucleic acids. The protein is 7-methyl-GTP pyrophosphatase of Xanthomonas axonopodis pv. citri (strain 306).